The following is a 271-amino-acid chain: (21S)-21-acetoxyl-apo-melianone synthase SDR (271 aa).

The active-site Proton donor is S150. Y163 (proton acceptor) is an active-site residue. Catalysis depends on K167, which acts as the Proton donor/acceptor.

The protein belongs to the short-chain dehydrogenases/reductases (SDR) family. In terms of tissue distribution, mainly expressed in petioles.

The catalysed reaction is 21-O-acetyl-isomeliandiol + A = (21S)-21-acetoxyl-apo-melianone + AH2. Its pathway is secondary metabolite biosynthesis; terpenoid biosynthesis. In terms of biological role, oxidoreductase involved in the biosynthesis of limonoids triterpene natural products such as azadirachtin, an antifeedant widely used as bioinsecticide, and possessing many medicinal applications including anti-tumoral, anti-malarial, anti-rheumatic, antibacterial, anti-inflammatory, anti-pyretic and diuretic effects. Catalyzes the oxidation of 21-O-acetyl-isomeliandiol to (21S)-21-acetoxyl-apo-melianone. The polypeptide is (21S)-21-acetoxyl-apo-melianone synthase SDR (Melia azedarach (Chinaberry tree)).